We begin with the raw amino-acid sequence, 131 residues long: Methylglyoxal synthase (131 aa).

The 131-residue stretch at Met-1 to Lys-131 folds into the MGS-like domain. Residues His-8, Lys-12, Thr-34–Thr-37, and Ser-54–Gly-55 contribute to the substrate site. Asp-60 serves as the catalytic Proton donor/acceptor. His-87 lines the substrate pocket.

It belongs to the methylglyoxal synthase family.

The enzyme catalyses dihydroxyacetone phosphate = methylglyoxal + phosphate. Functionally, catalyzes the formation of methylglyoxal from dihydroxyacetone phosphate. This is Methylglyoxal synthase from Bacillus anthracis (strain A0248).